Consider the following 290-residue polypeptide: Inositol monophosphatase 2 (290 aa).

4 residues coordinate Mg(2+): E83, D103, I105, and D106. E83 is a binding site for substrate. Substrate is bound by residues 105-108, 207-209, Q226, and D233; these read IDGT and GSS. D233 lines the Mg(2+) pocket.

It belongs to the inositol monophosphatase superfamily. As to quaternary structure, homodimer. The cofactor is Mg(2+). In terms of tissue distribution, mostly expressed in brain, small intestine, heart, kidney, and spleen (at protein level).

Its subcellular location is the cytoplasm. It catalyses the reaction a myo-inositol phosphate + H2O = myo-inositol + phosphate. It carries out the reaction 1D-myo-inositol 1-phosphate + H2O = myo-inositol + phosphate. The enzyme catalyses 1D-myo-inositol 2-phosphate + H2O = myo-inositol + phosphate. The catalysed reaction is 1D-myo-inositol 3-phosphate + H2O = myo-inositol + phosphate. It catalyses the reaction 1D-myo-inositol 4-phosphate + H2O = myo-inositol + phosphate. It carries out the reaction 1D-myo-inositol 5-phosphate + H2O = myo-inositol + phosphate. The enzyme catalyses 1D-myo-inositol 6-phosphate + H2O = myo-inositol + phosphate. The catalysed reaction is alpha-D-glucose 1-phosphate + H2O = D-glucose + phosphate. It catalyses the reaction glycerol 2-phosphate + H2O = glycerol + phosphate. It carries out the reaction adenosine 2'-phosphate + H2O = adenosine + phosphate. The protein operates within polyol metabolism; myo-inositol biosynthesis; myo-inositol from D-glucose 6-phosphate: step 2/2. Its function is as follows. Phosphatase that can use myo-inositol monophosphates, myo-inositol 1,4-diphosphate, scyllo-inositol-1,4-diphosphate, glucose-1-phosphate, beta-glycerophosphate and 2'-AMP as substrates in vitro. No physiological substrates has been described yet. Has been implicated as the pharmacological target for lithium Li(+) action in brain. The chain is Inositol monophosphatase 2 from Mus musculus (Mouse).